The sequence spans 227 residues: Cytochrome c oxidase subunit 2 (227 aa).

The Mitochondrial intermembrane segment spans residues 1–14 (MAYPFQLGLQDATS). Residues 15-45 (PIMEELLHFHDHTLMIVFLISSLVLYIISLM) traverse the membrane as a helical segment. The Mitochondrial matrix segment spans residues 46 to 59 (LTTKLTHTSTMDAQ). A helical membrane pass occupies residues 60–87 (EVETVWTILPAIILILIALLSLRILYMM). At 88 to 227 (DEINNPFLTM…YFETWSALMV (140 aa)) the chain is on the mitochondrial intermembrane side. Cu cation is bound by residues H161, C196, E198, C200, H204, and M207. Mg(2+) is bound at residue E198. Y218 carries the phosphotyrosine modification.

This sequence belongs to the cytochrome c oxidase subunit 2 family. As to quaternary structure, component of the cytochrome c oxidase (complex IV, CIV), a multisubunit enzyme composed of 14 subunits. The complex is composed of a catalytic core of 3 subunits MT-CO1, MT-CO2 and MT-CO3, encoded in the mitochondrial DNA, and 11 supernumerary subunits COX4I, COX5A, COX5B, COX6A, COX6B, COX6C, COX7A, COX7B, COX7C, COX8 and NDUFA4, which are encoded in the nuclear genome. The complex exists as a monomer or a dimer and forms supercomplexes (SCs) in the inner mitochondrial membrane with NADH-ubiquinone oxidoreductase (complex I, CI) and ubiquinol-cytochrome c oxidoreductase (cytochrome b-c1 complex, complex III, CIII), resulting in different assemblies (supercomplex SCI(1)III(2)IV(1) and megacomplex MCI(2)III(2)IV(2)). Found in a complex with TMEM177, COA6, COX18, COX20, SCO1 and SCO2. Interacts with TMEM177 in a COX20-dependent manner. Interacts with COX20. Interacts with COX16. Requires Cu cation as cofactor.

The protein resides in the mitochondrion inner membrane. It catalyses the reaction 4 Fe(II)-[cytochrome c] + O2 + 8 H(+)(in) = 4 Fe(III)-[cytochrome c] + 2 H2O + 4 H(+)(out). In terms of biological role, component of the cytochrome c oxidase, the last enzyme in the mitochondrial electron transport chain which drives oxidative phosphorylation. The respiratory chain contains 3 multisubunit complexes succinate dehydrogenase (complex II, CII), ubiquinol-cytochrome c oxidoreductase (cytochrome b-c1 complex, complex III, CIII) and cytochrome c oxidase (complex IV, CIV), that cooperate to transfer electrons derived from NADH and succinate to molecular oxygen, creating an electrochemical gradient over the inner membrane that drives transmembrane transport and the ATP synthase. Cytochrome c oxidase is the component of the respiratory chain that catalyzes the reduction of oxygen to water. Electrons originating from reduced cytochrome c in the intermembrane space (IMS) are transferred via the dinuclear copper A center (CU(A)) of subunit 2 and heme A of subunit 1 to the active site in subunit 1, a binuclear center (BNC) formed by heme A3 and copper B (CU(B)). The BNC reduces molecular oxygen to 2 water molecules using 4 electrons from cytochrome c in the IMS and 4 protons from the mitochondrial matrix. This Nyctereutes procyonoides (Raccoon dog) protein is Cytochrome c oxidase subunit 2 (MT-CO2).